We begin with the raw amino-acid sequence, 400 residues long: tRNA pseudouridine synthase Pus10 (400 aa).

Residues 77-194 (QVYVELFGSP…DGSVSVQPRR (118 aa)) enclose the THUMP domain. Position 301 (Tyr301) interacts with substrate.

It belongs to the pseudouridine synthase Pus10 family.

The catalysed reaction is uridine(54) in tRNA = pseudouridine(54) in tRNA. It carries out the reaction uridine(55) in tRNA = pseudouridine(55) in tRNA. Responsible for synthesis of pseudouridine from uracil-54 and uracil-55 in the psi GC loop of transfer RNAs. This chain is tRNA pseudouridine synthase Pus10, found in Acidilobus saccharovorans (strain DSM 16705 / JCM 18335 / VKM B-2471 / 345-15).